A 781-amino-acid polypeptide reads, in one-letter code: MAVAEVSRTCLLTVRVLQAHRLPSKDLVTPSDCYVTLWLPTACSHRLQTRTVKNSSSPVWNQSFHFRIHRQLKNVMELKVFDQDLVTGDDPVLSVLFDAGTLRAGEFRRESFSLSPQGEGRLEVEFRLQSLADRGEWLVSNGVLVARELSCLHVQLEETGDQKSSEHRVQLVVPGSCEGPQEASVGTGTFRFHCPACWEQELSIRLQDAPEEQLKAPLSALPSGQVVRLVFPTSQEPLMRVELKKEAGLRELAVRLGFGPCAEEQAFLSRRKQVVAAALRQALQLDGDLQEDEIPVVAIMATGGGIRAMTSLYGQLAGLKELGLLDCVSYITGASGSTWALANLYEDPEWSQKDLAGPTELLKTQVTKNKLGVLAPSQLQRYRQELAERARLGYPSCFTNLWALINEALLHDEPHDHKLSDQREALSHGQNPLPIYCALNTKGQSLTTFEFGEWCEFSPYEVGFPKYGAFIPSELFGSEFFMGQLMKRLPESRICFLEGIWSNLYAANLQDSLYWASEPSQFWDRWVRNQANLDKEQVPLLKIEEPPSTAGRIAEFFTDLLTWRPLAQATHNFLRGLHFHKDYFQHPHFSTWKATTLDGLPNQLTPSEPHLCLLDVGYLINTSCLPLLQPTRDVDLILSLDYNLHGAFQQLQLLGRFCQEQGIPFPPISPSPEEQLQPRECHTFSDPTCPGAPAVLHFPLVSDSFREYSAPGVRRTPEEAAAGEVNLSSSDSPYHYTKVTYSQEDVDKLLHLTHYNVCNNQEQLLEALRQAVQRRRQRRPH.

The C2 domain occupies 1 to 112 (MAVAEVSRTC…RAGEFRRESF (112 aa)). Residues Asp26, Asp32, Asp82, Asp84, and Asp90 each contribute to the Ca(2+) site. The PLA2c domain occupies 246–781 (EAGLRELAVR…VQRRRQRRPH (536 aa)). Ser335 functions as the Nucleophile in the catalytic mechanism. Residue Asp615 is the Proton acceptor of the active site.

Ca(2+) serves as cofactor. As to expression, widely expressed. Expressed at higher level in brain, heart, liver, cerebellum and pancreas.

The protein resides in the cytoplasm. The protein localises to the cytosol. It is found in the mitochondrion membrane. Its subcellular location is the early endosome membrane. It carries out the reaction a 1,2-diacyl-sn-glycero-3-phosphocholine + H2O = a 1-acyl-sn-glycero-3-phosphocholine + a fatty acid + H(+). The catalysed reaction is a 1-acyl-sn-glycero-3-phosphocholine + H2O = sn-glycerol 3-phosphocholine + a fatty acid + H(+). It catalyses the reaction 1-hexadecanoyl-2-(9Z,12Z-octadecadienoyl)-sn-glycero-3-phosphoethanolamine + H2O = 1-hexadecanoyl-sn-glycero-3-phosphoethanolamine + (9Z,12Z)-octadecadienoate + H(+). The enzyme catalyses 1-hexadecanoyl-2-(5Z,8Z,11Z,14Z-eicosatetraenoyl)-sn-glycero-3-phosphoethanolamine + H2O = 1-hexadecanoyl-sn-glycero-3-phosphoethanolamine + (5Z,8Z,11Z,14Z)-eicosatetraenoate + H(+). It carries out the reaction 1-hexadecanoyl-sn-glycero-3-phosphocholine + H2O = sn-glycerol 3-phosphocholine + hexadecanoate + H(+). The catalysed reaction is 1-hexadecanoyl-2-(5Z,8Z,11Z,14Z-eicosatetraenoyl)-sn-glycero-3-phosphocholine + H2O = 1-hexadecanoyl-sn-glycero-3-phosphocholine + (5Z,8Z,11Z,14Z)-eicosatetraenoate + H(+). It catalyses the reaction 1-hexadecanoyl-2-(5Z,8Z,11Z,14Z-eicosatetraenoyl)-sn-glycero-3-phosphocholine + H2O = 2-(5Z,8Z,11Z,14Z)-eicosatetraenoyl-sn-glycero-3-phosphocholine + hexadecanoate + H(+). With respect to regulation, stimulated by cytosolic Ca(2+). In terms of biological role, calcium-dependent phospholipase A1 and A2 and lysophospholipase that may play a role in membrane phospholipid remodeling. Its function is as follows. Calcium-dependent phospholipase A2 and lysophospholipase. Cleaves the ester bond of the fatty acyl group attached to the sn-2 position of phosphatidylethanolamines, producing lysophospholipids that may be used in deacylation-reacylation cycles. Hydrolyzes lysophosphatidylcholines with low efficiency but is inefficient toward phosphatidylcholines. Functionally, calcium-dependent phospholipase A1 and A2 and lysophospholipase. Cleaves the ester bond of the fatty acyl group attached to the sn-1 or sn-2 position of diacyl phospholipids (phospholipase A1 and A2 activity, respectively), producing lysophospholipids that may be used in deacylation-reacylation cycles. Can further hydrolyze lysophospholipids enabling complete deacylation. Has no activity toward alkylacyl phospholipids. The protein is Cytosolic phospholipase A2 beta (PLA2G4B) of Homo sapiens (Human).